Here is a 182-residue protein sequence, read N- to C-terminus: Oligoribonuclease (182 aa).

The 164-residue stretch at 8–171 (LIWIDLEMTG…DDIRESIKEL (164 aa)) folds into the Exonuclease domain. Tyrosine 129 is a catalytic residue.

Belongs to the oligoribonuclease family.

It localises to the cytoplasm. In terms of biological role, 3'-to-5' exoribonuclease specific for small oligoribonucleotides. The chain is Oligoribonuclease from Haemophilus influenzae (strain PittGG).